Reading from the N-terminus, the 158-residue chain is Ribosome maturation factor RimP (158 aa).

It belongs to the RimP family.

The protein localises to the cytoplasm. In terms of biological role, required for maturation of 30S ribosomal subunits. This chain is Ribosome maturation factor RimP, found in Pseudomonas fluorescens (strain SBW25).